We begin with the raw amino-acid sequence, 593 residues long: MAPAAGACAGAPDSHPATVVFVCLFLIIFCPDPASAIQVTVSDPYHVVILFQPVTLPCTYQMSNTLTVPIVIWKYKSFCRDRIADAFSPASVDNQLNAQLAAGNPGYNPYVECQDSVRTVRVVATKQGNAVTLGDYYQGRRITITGNADLTFEQTAWGDSGVYYCSVVSAQDLDGNNEAYAELIVLGRTSEAPELLPGFRAGPLEDWLFVVVVCLASLLLFLLLGICWCQCCPHTCCCYVRCPCCPDKCCCPEALYAAGKAATSGVPSIYAPSIYTHLSPAKTPPPPPAMIPMGPPYGYPGDFDRHSSVGGHSSQVPLLRDVDGSVSSEVRSGYRIQANQQDDSMRVLYYMEKELANFDPSRPGPPNGRVERAMSEVTSLHEDDWRSRPSRAPALTPIRDEEWNRHSPQSPRTWEQEPLQEQPRGGWGSGRPRARSVDALDDINRPGSTESGRSSPPSSGRRGRAYAPPRSRSRDDLYDPDDPRDLPHSRDPHYYDDIRSRDPRADPRSRQRSRDPRDAGFRSRDPQYDGRLLEEALKKKGSGERRRVYREEEEEEEGQYPPAPPPYSETDSQASRERRLKKNLALSRESLVV.

The first 35 residues, 1–35 (MAPAAGACAGAPDSHPATVVFVCLFLIIFCPDPAS), serve as a signal peptide directing secretion. Topologically, residues 36–206 (AIQVTVSDPY…PGFRAGPLED (171 aa)) are extracellular. Residues 89-181 (PASVDNQLNA…DLDGNNEAYA (93 aa)) form the Ig-like V-type domain. C113 and C165 form a disulfide bridge. Residues 207 to 227 (WLFVVVVCLASLLLFLLLGIC) traverse the membrane as a helical segment. The Cytoplasmic portion of the chain corresponds to 228–593 (WCQCCPHTCC…LALSRESLVV (366 aa)). T283 carries the post-translational modification Phosphothreonine. Residues S308, S314, S332, S375, and S379 each carry the phosphoserine modification. Basic and acidic residues predominate over residues 375–387 (SEVTSLHEDDWRS). Positions 375 to 578 (SEVTSLHEDD…ETDSQASRER (204 aa)) are disordered. At T396 the chain carries Phosphothreonine. S407, S410, and S436 each carry phosphoserine. The segment covering 435-444 (RSVDALDDIN) has biased composition (basic and acidic residues). The span at 445 to 460 (RPGSTESGRSSPPSSG) shows a compositional bias: low complexity. Residues S471 and S473 each carry the phosphoserine modification. Positions 472 to 550 (RSRDDLYDPD…GSGERRRVYR (79 aa)) are enriched in basic and acidic residues. Y478 is modified (phosphotyrosine). S575 is subject to Phosphoserine. K582 participates in a covalent cross-link: Glycyl lysine isopeptide (Lys-Gly) (interchain with G-Cter in ubiquitin). A phosphoserine mark is found at S587 and S590.

This sequence belongs to the immunoglobulin superfamily. LISCH7 family. In terms of assembly, homotrimer or homotetramer constituted of isoform 1 and/or isoform 2 and isoform 3. Assembles into cell-cell contacts. Interacts (via the cytoplasmic domain) with MARVELD2 (via C-terminal cytoplasmic domain); the interaction is required to recruit MARVELD2 to tricellular contacts. Interacts with OCLN. Phosphorylation at Ser-308 by MAPK8/JNK1 and MAPK9/JNK2 may be required for exclusive localization at tricellular tight junstions. Post-translationally, polyubiquitinated at Lys-582 via 'Lys-63'-linked ubiquitin chains; deubiquitinated by USP53. In terms of tissue distribution, specifically expressed in liver. Also detected in kidney and lung.

It is found in the cell membrane. Its subcellular location is the cell junction. The protein localises to the tight junction. In terms of biological role, probable role in the clearance of triglyceride-rich lipoprotein from blood. Binds chylomicrons, LDL and VLDL in presence of free fatty acids and allows their subsequent uptake in the cells. Maintains epithelial barrier function by recruiting MARVELD2/tricellulin to tricellular tight junctions. This chain is Lipolysis-stimulated lipoprotein receptor, found in Rattus norvegicus (Rat).